We begin with the raw amino-acid sequence, 33 residues long: Mu/omega-theraphotoxin-Tap2a (33 aa).

3 cysteine pairs are disulfide-bonded: Cys2–Cys17, Cys9–Cys22, and Cys16–Cys29.

It belongs to the neurotoxin 10 (Hwtx-1) family. 59 (Tltx) subfamily. Expressed by the venom gland.

The protein resides in the secreted. In terms of biological role, gating-modifier toxin that inhibits both sodium (Nav) and calcium (Cav3) channels by inducing hyperpolarizing shift in voltage-dependence of activation and steady state inactivation. Inhibits Nav1.1/SCN1A, Nav1.2/SCN2A, Nav1.6/SCN6A, Nav1.7/SCN9A and Cav3.1/CACNA1G sodium and calcium channels at nanomolar concentrations (IC(50)=169-621 nM). Surprisingly, selectively slows fast inactivation of Nav1.3/SCN3A. Also shows moderate inhibition of Nav1.3/SCN3A sodium channels (IC(50)=1216 nM). This Theraphosa apophysis (Goliath pinkfoot tarantula) protein is Mu/omega-theraphotoxin-Tap2a.